The sequence spans 131 residues: Ribosome-binding factor A (131 aa).

This sequence belongs to the RbfA family. In terms of assembly, monomer. Binds 30S ribosomal subunits, but not 50S ribosomal subunits or 70S ribosomes.

It localises to the cytoplasm. Its function is as follows. One of several proteins that assist in the late maturation steps of the functional core of the 30S ribosomal subunit. Associates with free 30S ribosomal subunits (but not with 30S subunits that are part of 70S ribosomes or polysomes). Required for efficient processing of 16S rRNA. May interact with the 5'-terminal helix region of 16S rRNA. In Ruegeria pomeroyi (strain ATCC 700808 / DSM 15171 / DSS-3) (Silicibacter pomeroyi), this protein is Ribosome-binding factor A.